The following is a 200-amino-acid chain: WUSCHEL-related homeobox 9 (200 aa).

Positions 10-74 (VKCGRWNPTA…NHKARERHHH (65 aa)) form a DNA-binding region, homeobox; WUS-type. Basic residues predominate over residues 70 to 80 (ERHHHKKRRRG). The tract at residues 70-118 (ERHHHKKRRRGASSPDSGSNDDDGRAAAHEGDADLVLQPPESKREARSY) is disordered. Over residues 91-101 (DDGRAAAHEGD) the composition is skewed to basic and acidic residues.

Belongs to the WUS homeobox family. In terms of tissue distribution, specifically expressed in the central cells of the quiescent center (QC) of the root.

The protein localises to the nucleus. Functionally, transcription factor which may be involved in the specification and maintenance of the stem cells (QC cells) in the root apical meristem (RAM). This Oryza sativa subsp. japonica (Rice) protein is WUSCHEL-related homeobox 9 (WOX9).